A 450-amino-acid chain; its full sequence is 3-phosphoshikimate 1-carboxyvinyltransferase (450 aa).

3-phosphoshikimate is bound by residues Lys-28, Ser-29, and Arg-33. Phosphoenolpyruvate is bound at residue Lys-28. 2 residues coordinate phosphoenolpyruvate: Gly-100 and Arg-128. Ser-173, Gln-175, Asp-326, and Lys-353 together coordinate 3-phosphoshikimate. Gln-175 contacts phosphoenolpyruvate. Asp-326 functions as the Proton acceptor in the catalytic mechanism. 2 residues coordinate phosphoenolpyruvate: Arg-357 and Arg-402.

Belongs to the EPSP synthase family. As to quaternary structure, monomer.

It localises to the cytoplasm. It carries out the reaction 3-phosphoshikimate + phosphoenolpyruvate = 5-O-(1-carboxyvinyl)-3-phosphoshikimate + phosphate. Its pathway is metabolic intermediate biosynthesis; chorismate biosynthesis; chorismate from D-erythrose 4-phosphate and phosphoenolpyruvate: step 6/7. Functionally, catalyzes the transfer of the enolpyruvyl moiety of phosphoenolpyruvate (PEP) to the 5-hydroxyl of shikimate-3-phosphate (S3P) to produce enolpyruvyl shikimate-3-phosphate and inorganic phosphate. The chain is 3-phosphoshikimate 1-carboxyvinyltransferase from Brucella melitensis biotype 2 (strain ATCC 23457).